Here is a 64-residue protein sequence, read N- to C-terminus: Large ribosomal subunit protein bL33 (64 aa).

This sequence belongs to the bacterial ribosomal protein bL33 family.

This is Large ribosomal subunit protein bL33 from Gloeothece citriformis (strain PCC 7424) (Cyanothece sp. (strain PCC 7424)).